The chain runs to 356 residues: Probable arabinogalactan endo-beta-1,4-galactanase A (356 aa).

Residues 1 to 21 form the signal peptide; sequence MLGKTVLLPLLVLLCHSLASA. The N-linked (GlcNAc...) asparagine glycan is linked to Asn-133. Catalysis depends on Glu-157, which acts as the Proton donor. Catalysis depends on Glu-268, which acts as the Nucleophile.

The protein belongs to the glycosyl hydrolase 53 family.

It localises to the secreted. The catalysed reaction is The enzyme specifically hydrolyzes (1-&gt;4)-beta-D-galactosidic linkages in type I arabinogalactans.. Its function is as follows. Endogalactanase involved in the degradation of plant cell wall polysaccharides, and more particularly of hairy regions of pectin. The protein is Probable arabinogalactan endo-beta-1,4-galactanase A (galA) of Aspergillus fumigatus (strain ATCC MYA-4609 / CBS 101355 / FGSC A1100 / Af293) (Neosartorya fumigata).